The chain runs to 260 residues: UPF0246 protein BPSL1241 (260 aa).

This sequence belongs to the UPF0246 family.

This is UPF0246 protein BPSL1241 from Burkholderia pseudomallei (strain K96243).